A 192-amino-acid chain; its full sequence is Ribosome maturation factor RimP (192 aa).

Belongs to the RimP family.

The protein localises to the cytoplasm. Functionally, required for maturation of 30S ribosomal subunits. The chain is Ribosome maturation factor RimP from Mycobacterium sp. (strain JLS).